The primary structure comprises 275 residues: Methylesterase 10 (275 aa).

The active-site Acyl-ester intermediate is S96. Residues D225 and H253 each act as charge relay system in the active site.

Belongs to the AB hydrolase superfamily. Methylesterase family.

It carries out the reaction methyl (-)-jasmonate + H2O = jasmonate + methanol + H(+). It functions in the pathway plant hormone biosynthesis. It participates in lipid metabolism; oxylipin biosynthesis. Methylesterase shown to have methyl jasmonate (MeJA) esterase activity in vitro. The protein is Methylesterase 10 of Arabidopsis thaliana (Mouse-ear cress).